We begin with the raw amino-acid sequence, 286 residues long: MSVVTACITPFKADLSIDFAALESVVRSQEHAGNGVFLFGSTGESLSLAYEEKFAALSFVSTLKLNVPLFLGVTATSIQEAISWIEFAQRWPIDGFFVPTPLYTKPGLYGQKVWFEKILSVSKKPIILYNNPSRTGVALHPEVVKSLASHPLCMGVKDSGGSTQACTLFAESGVRVFCGDDGMWPEMRLSGASGLVSVLSNVWPELARDYVAQCRSIDAWKKTCSWLELSVNPLGIKALMAAQKMIECELVRPPLSIRDFQERDQLADILACRAILQAELLSVCVQ.

T42 contributes to the pyruvate binding site. Residue Y129 is the Proton donor/acceptor of the active site. K157 serves as the catalytic Schiff-base intermediate with substrate. V196 serves as a coordination point for pyruvate.

This sequence belongs to the DapA family. In terms of assembly, homotetramer; dimer of dimers.

It localises to the cytoplasm. The catalysed reaction is L-aspartate 4-semialdehyde + pyruvate = (2S,4S)-4-hydroxy-2,3,4,5-tetrahydrodipicolinate + H2O + H(+). The protein operates within amino-acid biosynthesis; L-lysine biosynthesis via DAP pathway; (S)-tetrahydrodipicolinate from L-aspartate: step 3/4. Its function is as follows. Catalyzes the condensation of (S)-aspartate-beta-semialdehyde [(S)-ASA] and pyruvate to 4-hydroxy-tetrahydrodipicolinate (HTPA). The sequence is that of 4-hydroxy-tetrahydrodipicolinate synthase from Chlamydia muridarum (strain MoPn / Nigg).